Reading from the N-terminus, the 88-residue chain is Small ribosomal subunit protein uS15 (88 aa).

Residues 1–12 (MLTNTDRQQVIA) show a composition bias toward polar residues. The tract at residues 1 to 23 (MLTNTDRQQVIAQYQRAPGDTGS) is disordered.

Belongs to the universal ribosomal protein uS15 family. Part of the 30S ribosomal subunit. Forms a bridge to the 50S subunit in the 70S ribosome, contacting the 23S rRNA.

In terms of biological role, one of the primary rRNA binding proteins, it binds directly to 16S rRNA where it helps nucleate assembly of the platform of the 30S subunit by binding and bridging several RNA helices of the 16S rRNA. Functionally, forms an intersubunit bridge (bridge B4) with the 23S rRNA of the 50S subunit in the ribosome. The protein is Small ribosomal subunit protein uS15 of Psychrobacter sp. (strain PRwf-1).